The sequence spans 339 residues: MSTVHEILSKLSLEGDHSLPPSAYATVKAYSNFDADRDAAALEAAIKTKGVDEVTIINILTNRSNEQRQDIAFAYQRRTKKELSAALKSALSGHLEAVILGLLKTPSQYDASELKAAMKGLGTDEDTLIEIICSRTNQELNEINRVYREMYKTELEKDIISDTSGDFRKLMVALAKGKRCEDTSVIDYELIDQDARELYDAGVKRKGTDVPKWINIMTERSVPHLQKVFERYKSYSPYDMLESIKKEVKGDLENAFLNLVQCIQNKQLYFADRLYDSMKGKGTRDKVLIRIMVSRCEVDMLKIKSEFKRKYGKSLYYFIQQDTKGDYQRALLNLCGGED.

The residue at position 2 (Ser-2) is an N-acetylserine. The segment at 2–24 is S100A10-binding site; that stretch reads STVHEILSKLSLEGDHSLPPSAY. Residue Tyr-24 is modified to Phosphotyrosine; by SRC. Position 26 is a phosphothreonine; by PKC (Thr-26). Annexin repeat units follow at residues 33 to 104, 105 to 176, 189 to 261, and 265 to 336; these read FDAD…GLLK, TPSQ…ALAK, ELID…NLVQ, and NKQL…NLCG.

Belongs to the annexin family. Heterotetramer containing 2 light chains of S100A10/p11 and 2 heavy chains of ANXA2/p36.

The protein localises to the secreted. It is found in the extracellular space. The protein resides in the extracellular matrix. It localises to the basement membrane. In terms of biological role, calcium-regulated membrane-binding protein whose affinity for calcium is greatly enhanced by anionic phospholipids. It binds two calcium ions with high affinity. The polypeptide is Annexin A2 (ANXA2) (Gallus gallus (Chicken)).